A 158-amino-acid chain; its full sequence is Cytosine deaminase (158 aa).

Residues 9–129 (KWDQKGMDIA…KYLQTRGHEV (121 aa)) enclose the CMP/dCMP-type deaminase domain. Asn51 serves as a coordination point for substrate. His62 is a Zn(2+) binding site. Glu64 serves as the catalytic Proton donor. Residues Cys91 and Cys94 each contribute to the Zn(2+) site. Position 155 (Asp155) interacts with substrate.

This sequence belongs to the cytidine and deoxycytidylate deaminase family. As to quaternary structure, homodimer. Requires Zn(2+) as cofactor.

The protein localises to the cytoplasm. It localises to the nucleus. The enzyme catalyses cytosine + H2O + H(+) = uracil + NH4(+). The protein operates within pyrimidine metabolism; UMP biosynthesis via salvage pathway; uracil from cytosine: step 1/1. Functionally, catalyzes the hydrolytic deamination of cytosine to uracil or 5-methylcytosine to thymine. Is involved in the pyrimidine salvage pathway, which allows the cell to utilize cytosine for pyrimidine nucleotide synthesis. This chain is Cytosine deaminase, found in Saccharomyces cerevisiae (strain ATCC 204508 / S288c) (Baker's yeast).